Here is a 500-residue protein sequence, read N- to C-terminus: Protein gar2 (500 aa).

Basic and acidic residues-rich tracts occupy residues 1–41 (MAKK…KEIA) and 59–68 (KRASSPEPSK). Residues 1 to 262 (MAKKDKTSVK…TKPSQDSNET (262 aa)) form a disordered region. The segment covering 69 to 78 (KSVKKQKKSK) has biased composition (basic residues). The segment covering 90-120 (ESSSSESESSSSESESSSSESESSSSESSSS) has biased composition (low complexity). Over residues 126 to 137 (VIVKTEEKKESS) the composition is skewed to basic and acidic residues. A phosphoserine mark is found at Ser143, Ser144, and Ser146. The span at 152–163 (AVVKIEEKKESS) shows a compositional bias: basic and acidic residues. The span at 164–182 (SDSSSESSSSESESESSSS) shows a compositional bias: low complexity. A compositionally biased stretch (basic and acidic residues) spans 191 to 201 (VEKTEEKKEGS). The segment covering 202–218 (SESSSDSESSSDSSSES) has biased composition (low complexity). The span at 219–233 (GDSDSSSDSESESSS) shows a compositional bias: acidic residues. Residues 234-250 (EDEKKRKAEPASEERPA) show a composition bias toward basic and acidic residues. RRM domains follow at residues 263–341 (CTVF…LSNP) and 366–443 (DTVF…FSTP). Residues 441–500 (STPRTGGGSRGGRGGFGGRGGFGGRGGFGGGRGRGRGGARSGNPNRGSVAPFSGNKVTFD) form a disordered region. Residues 445–480 (TGGGSRGGRGGFGGRGGFGGRGGFGGGRGRGRGGAR) show a composition bias toward gly residues.

The protein belongs to the RRM GAR family.

It localises to the nucleus. It is found in the nucleolus. In terms of biological role, helps the assembly of pre-ribosomal particles containing 18S rRNA. The protein is Protein gar2 (gar2) of Schizosaccharomyces pombe (strain 972 / ATCC 24843) (Fission yeast).